The following is a 679-amino-acid chain: MGALTSRQHAGVEEVDIPSNSVYRYPPKSGSYFASHFIMGGEKFDSTHPEGYLFGENSDLNFLGNRPVVFPYAAPPPQEPVKTLRSLVNIRKDTLRLVKCAEEVKSPGEEASKAKVHYNVEFTFDTDARVAITIYYQATEEFQNGIASYIPKDNSLQSETVQYKRGVCQQFCLPSHTVDPSEWAEEELGFDLDREVYPLVVHAVVDEGDEYFGHCHVLLGTFEKHTDGTFCVKPLKQKQVVDGVSYLLQEIYGIENKYNTQDSKVAEDEVSDNSAECVVCLSDVRDTLILPCRHLCLCNTCADTLRYQANNCPICRLPFRALLQIRAMRKKLGPLSPTSFNPIISSQTSDSEEHPSSENIPPGYEVVSLLEALNGPLTPSPAVPPLHVLGDGHLSGMLPSYGSDGHLPPVRTISPLDRLSDSSSQGLKLKKSLSKSTSQNSSVLHEEEDEHSCSESETQLSQRPSVQHLGEECGVTPESENLTLSSSGAIDQSSCTGTPLSSTISSPEGPASSSLAQSVMSMASSQISTDTVSSMSGSYIAPGTEEEGEALSSPQPASRAPSEEGEGLPAESPDSNFAGLPAGEQDAEGNDVIEEEDGSPTQEGQRTCAFLGMECDNNNDFDIASVKALDNKLCSEVCLPGAWQADDNAVSRNAQRRRLSSSSLEDSETRPCVWGPLAV.

Gly2 carries N-myristoyl glycine lipidation. The segment at Cys277 to Arg316 adopts an RING-type zinc-finger fold. The D-box 1 motif lies at Arg329–Leu332. Composition is skewed to polar residues over residues Ser339 to Ser349 and Glu478 to Gly537. Disordered regions lie at residues Ser339–Pro362, Leu416–Gly604, and Val650–Val679. Residues Gln585–Gly598 show a composition bias toward acidic residues. The D-box 2 motif lies at Arg656–Leu659. Phosphoserine is present on residues Ser660, Ser661, Ser662, and Ser663.

Interacts with APBB1. Interacts with CHD1; CHD1-binding controls RNF157 stability. Interacts with ATRN, MEGF8, TECR, MSI2, PLRG1, BYSL, MTERF3, PSMA1, MRPS18B, PRPF4, FASTKD2, SLC25A1, SMU1, CNOT9, MRPS2, MAGT1, FXR2, EMD, PSMD8, HDAC1, RAN, HSD17B12, TXNDC5 and MRPL19. Post-translationally, phosphorylation at Ser-660, Ser-661, Ser-662 and Ser-663 downstream of the PI3K and MAPK pathways influences the E3 ligase activity and stability of RNF157 during the cell cycle in an anaphase-promoting complex/cyclosome-CDH1-dependent manner.

The protein resides in the cytoplasm. It carries out the reaction S-ubiquitinyl-[E2 ubiquitin-conjugating enzyme]-L-cysteine + [acceptor protein]-L-lysine = [E2 ubiquitin-conjugating enzyme]-L-cysteine + N(6)-ubiquitinyl-[acceptor protein]-L-lysine.. E3 ubiquitin ligase that ubiquitinates APBB1 for its degradation by the proteasome and thus prevents apoptosis and promotes survival of neurons. Has a dual role in neurons as it is also required for dendrite growth and maintenance for which its ligase activity is not critical. May act as a scaffold molecule to regulate this process. Acts as a downstream effector of the interconnected PI3K and MAPK signaling pathways and thus participates in the regulation of the cell cycle. The chain is E3 ubiquitin ligase RNF157 (RNF157) from Homo sapiens (Human).